The primary structure comprises 184 residues: UPF0301 protein Rsph17029_2659 (184 aa).

It belongs to the UPF0301 (AlgH) family.

This is UPF0301 protein Rsph17029_2659 from Cereibacter sphaeroides (strain ATCC 17029 / ATH 2.4.9) (Rhodobacter sphaeroides).